A 674-amino-acid chain; its full sequence is Probable 3',5'-cyclic-AMP phosphodiesterase pde-4 (674 aa).

Residues 1 to 82 (MPRRRGSSSS…TSSASSYHPP (82 aa)) form a disordered region. A compositionally biased stretch (gly residues) spans 15–24 (GGSGGGGGFG). Residues 39 to 62 (RTSSPSASSTSRTPPAALPPRTSA) are compositionally biased toward low complexity. The segment covering 66–78 (PGSNHKLTSSASS) has biased composition (polar residues). A PDEase domain is found at 328 to 660 (HVPEYGVNCA…EWYQSRIPEE (333 aa)). Residue histidine 407 is the Proton donor of the active site. The a divalent metal cation site is built by histidine 411, histidine 447, aspartate 448, and aspartate 565.

It belongs to the cyclic nucleotide phosphodiesterase family. The cofactor is a divalent metal cation. In terms of tissue distribution, expressed in dorsal D (DD) motor neurons and several other neurons at the L1 stage. Expression in DD neurons decreases gradually beginning in the late L1 stage. Highly expressed in adult ventral D (VD) motor neurons, but diminished in adult DD motor neurons.

The enzyme catalyses 3',5'-cyclic AMP + H2O = AMP + H(+). Its function is as follows. Hydrolyzes the second messenger 3',5'-cyclic AMP (cAMP), which is a key regulator of many important physiological processes. Antagonizes dorsal D (DD) motor neuron respecification by reducing levels of cAMP. The protein is Probable 3',5'-cyclic-AMP phosphodiesterase pde-4 (pde-4) of Caenorhabditis elegans.